The sequence spans 235 residues: Phosphoribosylaminoimidazole-succinocarboxamide synthase (235 aa).

This sequence belongs to the SAICAR synthetase family.

The enzyme catalyses 5-amino-1-(5-phospho-D-ribosyl)imidazole-4-carboxylate + L-aspartate + ATP = (2S)-2-[5-amino-1-(5-phospho-beta-D-ribosyl)imidazole-4-carboxamido]succinate + ADP + phosphate + 2 H(+). It participates in purine metabolism; IMP biosynthesis via de novo pathway; 5-amino-1-(5-phospho-D-ribosyl)imidazole-4-carboxamide from 5-amino-1-(5-phospho-D-ribosyl)imidazole-4-carboxylate: step 1/2. In Streptococcus pneumoniae (strain ATCC 700669 / Spain 23F-1), this protein is Phosphoribosylaminoimidazole-succinocarboxamide synthase.